Reading from the N-terminus, the 164-residue chain is Diphosphoinositol polyphosphate phosphohydrolase 3-beta (164 aa).

Substrate contacts are provided by residues Arg9, 17–19 (KKR), and 38–40 (SSR). Residues 17-144 (KKRAACLCFR…VHAEYLQKLK (128 aa)) form the Nudix hydrolase domain. Residues Gly49 and Glu65 each contribute to the Mg(2+) site. Positions 50 to 71 (GGMEPEEEPGGAAVREVFEEAG) match the Nudix box motif. The active-site Proton acceptor is Glu68. Glu69 serves as a coordination point for Mg(2+). Residues 89-91 (RKH), Arg115, and Lys133 contribute to the substrate site. The interval 144-164 (KLGGSPTNGNSVAPSPPEGDP) is disordered.

The protein belongs to the Nudix hydrolase family. DIPP subfamily. It depends on Mg(2+) as a cofactor. Requires Mn(2+) as cofactor.

It localises to the cytoplasm. It catalyses the reaction diphospho-myo-inositol polyphosphate + H2O = myo-inositol polyphosphate + phosphate.. It carries out the reaction P(1),P(6)-bis(5'-adenosyl) hexaphosphate + H2O = adenosine 5'-pentaphosphate + AMP + 2 H(+). The enzyme catalyses P(1),P(5)-bis(5'-adenosyl) pentaphosphate + H2O = adenosine 5'-tetraphosphate + AMP + 2 H(+). Its function is as follows. Cleaves a beta-phosphate from the diphosphate groups in PP-InsP5 (diphosphoinositol pentakisphosphate), suggesting that it may play a role in signal transduction. Also able to catalyze the hydrolysis of dinucleoside oligophosphates, with Ap6A and Ap5A being the preferred substrates. The major reaction products are ADP and p4a from Ap6A and ADP and ATP from Ap5A. Also able to hydrolyze 5-phosphoribose 1-diphosphate. The protein is Diphosphoinositol polyphosphate phosphohydrolase 3-beta of Bos taurus (Bovine).